The primary structure comprises 426 residues: Putative phosphate permease CT_962 (426 aa).

Transmembrane regions (helical) follow at residues 1 to 21 (MWLL…NIGA), 37 to 57 (LTLK…AVLL), 83 to 103 (VFGM…ASFC), 104 to 124 (GWPV…GIIL), 140 to 160 (VSWL…FSFI), 183 to 203 (AIII…APVI), 207 to 227 (PALR…IWGI), 260 to 280 (LIVE…MSFA), 309 to 329 (VLLV…ATWG), 365 to 385 (LGFP…IGFA), and 399 to 419 (IVLS…VFFL).

This sequence belongs to the inorganic phosphate transporter (PiT) (TC 2.A.20) family.

The protein resides in the cell membrane. Its function is as follows. Potential transporter for phosphate. The sequence is that of Putative phosphate permease CT_962 from Chlamydia trachomatis serovar D (strain ATCC VR-885 / DSM 19411 / UW-3/Cx).